A 268-amino-acid polypeptide reads, in one-letter code: Tryptophan synthase alpha chain (268 aa).

Catalysis depends on proton acceptor residues glutamate 49 and aspartate 60.

It belongs to the TrpA family. Tetramer of two alpha and two beta chains.

The enzyme catalyses (1S,2R)-1-C-(indol-3-yl)glycerol 3-phosphate + L-serine = D-glyceraldehyde 3-phosphate + L-tryptophan + H2O. The protein operates within amino-acid biosynthesis; L-tryptophan biosynthesis; L-tryptophan from chorismate: step 5/5. Its function is as follows. The alpha subunit is responsible for the aldol cleavage of indoleglycerol phosphate to indole and glyceraldehyde 3-phosphate. This is Tryptophan synthase alpha chain from Vibrio metschnikovii.